A 71-amino-acid polypeptide reads, in one-letter code: Brevinin-1HN1 (71 aa).

A signal peptide spans Met-1 to Cys-22. Residues Glu-23 to Glu-45 constitute a propeptide that is removed on maturation. Cys-65 and Cys-71 are disulfide-bonded.

In terms of tissue distribution, expressed by the skin glands.

The protein localises to the secreted. Has antimicrobial activity against Gram-positive bacteria and fungi but has weak or no activity against a range of Gram-negative bacteria except P.faecalis. Active against the Gram-positive bacteria E.faecium 091299 (MIC=19 uM), E.faecalis 981 (MIC=19 uM), S.aureus ATCC 25923 (MIC=1.2 uM), S.carnosus KHS (MIC=4.8 uM), B.licheniformis X39 (MIC=2.4 uM) and R.rhodochrous X15 (MIC=1.2 uM). Active against the Gram-negative bacterium P.faecalis X29 (MIC=4.8 uM), is virtually inactive against E.coli ATCC 25922 (MIC=150 uM) and inactive against P.aeruginosa and S.typhi. Has antifungal activity against C.albicans ATCC 2002 (MIC=2.4 uM) and is also active against the slime mold 090223 (MIC=1.2 uM). Has low hemolytic activity against human erythrocytes (LC(50)=75 uM). The chain is Brevinin-1HN1 from Odorrana hainanensis (Odor frog).